Consider the following 223-residue polypeptide: N-terminal Xaa-Pro-Lys N-methyltransferase 1 (223 aa).

S-adenosyl-L-methionine contacts are provided by residues Gly69, Arg74, 91–93 (DVT), 119–120 (LQ), and Gln135.

This sequence belongs to the methyltransferase superfamily. NTM1 family.

It is found in the nucleus. The enzyme catalyses N-terminal L-alanyl-L-prolyl-L-lysyl-[protein] + 3 S-adenosyl-L-methionine = N-terminal N,N,N-trimethyl-L-alanyl-L-prolyl-L-lysyl-[protein] + 3 S-adenosyl-L-homocysteine + 3 H(+). The catalysed reaction is N-terminal L-seryl-L-prolyl-L-lysyl-[protein] + 3 S-adenosyl-L-methionine = N-terminal N,N,N-trimethyl-L-seryl-L-prolyl-L-lysyl-[protein] + 3 S-adenosyl-L-homocysteine + 3 H(+). It carries out the reaction N-terminal L-prolyl-L-prolyl-L-lysyl-[protein] + 2 S-adenosyl-L-methionine = N-terminal N,N-dimethyl-L-prolyl-L-prolyl-L-lysyl-[protein] + 2 S-adenosyl-L-homocysteine + 2 H(+). Its function is as follows. Distributive alpha-N-methyltransferase that methylates the N-terminus of target proteins containing the N-terminal motif [Ala/Gly/Pro/Ser]-Pro-Lys when the initiator Met is cleaved. Specifically catalyzes mono-, di- or tri-methylation of the exposed alpha-amino group of the Ala, Gly or Ser residue in the [Ala/Gly/Ser]-Pro-Lys motif and mono- or di-methylation of Pro in the Pro-Pro-Lys motif. Required during mitosis for normal bipolar spindle formation and chromosome segregation via its action on target proteins. The protein is N-terminal Xaa-Pro-Lys N-methyltransferase 1 (ntmt1) of Danio rerio (Zebrafish).